The chain runs to 602 residues: Aspartate--tRNA(Asp/Asn) ligase (602 aa).

Glu-170 contributes to the L-aspartate binding site. The interval 194 to 197 is aspartate; sequence QLFK. Arg-216 contacts L-aspartate. ATP-binding positions include 216-218 and Gln-225; that span reads RDE. Residue His-448 participates in L-aspartate binding. Residue Glu-482 participates in ATP binding. An L-aspartate-binding site is contributed by Arg-489. 534–537 is an ATP binding site; that stretch reads GWDR. The disordered stretch occupies residues 559-602; sequence GGVDPLTSAPAPITAQQRKESGVDAKPEPKGDAAAAKPQVSAEK. A compositionally biased stretch (basic and acidic residues) spans 575–589; sequence QRKESGVDAKPEPKG.

The protein belongs to the class-II aminoacyl-tRNA synthetase family. Type 1 subfamily. As to quaternary structure, homodimer.

Its subcellular location is the cytoplasm. It carries out the reaction tRNA(Asx) + L-aspartate + ATP = L-aspartyl-tRNA(Asx) + AMP + diphosphate. Aspartyl-tRNA synthetase with relaxed tRNA specificity since it is able to aspartylate not only its cognate tRNA(Asp) but also tRNA(Asn). Reaction proceeds in two steps: L-aspartate is first activated by ATP to form Asp-AMP and then transferred to the acceptor end of tRNA(Asp/Asn). This is Aspartate--tRNA(Asp/Asn) ligase from Rhodococcus opacus (strain B4).